The following is a 745-amino-acid chain: Cullin-2 (745 aa).

Lysine 393 carries the post-translational modification N6-acetyllysine. Position 661 is a phosphothreonine (threonine 661). A Cullin neddylation domain is found at aspartate 675–glutamine 735. Lysine 689 participates in a covalent cross-link: Glycyl lysine isopeptide (Lys-Gly) (interchain with G-Cter in NEDD8).

This sequence belongs to the cullin family. As to quaternary structure, component of multiple Cul2-RING (CRL2) E3 ubiquitin-protein ligase complexes consisting of CUL2, Elongin BC (ELOB and ELOC), RBX1 and a variable substrate-specific adapter; this complex is also known as ECS (Elongin BC-CUL2/5-SOCS-box protein) complex and may consist of CUL2 or CUL5. Component of the ECS(VHL) or CBC(VHL) complex containing CUL2, RBX1, ELOB, ELOC and VHL. Component of the ECS(MED8) complex with the probable substrate recognition component MED8. Component of multiple ECS complexes part of the DesCEND (destruction via C-end degrons) pathway, which contain either KLHDC2, KLHDC3, KLHDC10, APPBP2, FEM1A, FEM1B or FEM1C as substrate-recognition component. Component of the ECS(LRR1) complex with the substrate recognition component LRR1. Component of a CRL2(FEM1B) complex containing CUL2, RBX1, ELOB, ELOC and FEM1B. Component of a CRL2(FEM1C) complex containing CUL2, RBX1, ELOB, ELOC and FEM1C. Part of an E3 ubiquitin-protein ligase complex including ZYG11B, CUL2 and Elongin BC. Part of an E3 ubiquitin-protein ligase complex including ZER1, CUL2 and Elongin BC. Interacts with RBX1, RNF7, FEM1B and TIP120A/CAND1. Found in a complex composed of LIMD1, VHL, EGLN1/PHD2, ELOB and CUL2. Interacts (when neddylated) with ARIH1; leading to activate the E3 ligase activity of ARIH1. Interacts (unneddylated form) with DCUN1D1, DCUN1D2, DCUN1D3, DCUN1D4 and DCUN1D5; these interactions promote the cullin neddylation. Component of VCB (elongins BC/CUL2/VHL) complex that contains at least DCUN1D1, CUL2 and VHL; this complex triggers CUL2 neddylation and consequently cullin ring ligase (CRL) substrates polyubiquitylation. Post-translationally, neddylated; which enhances the ubiquitination activity of ECS (Elongin BC-CUL2/5-SOCS-box protein) E3 ubiquitin-protein ligase complexes. Neddylation leads to structural rearrangment in the complex that allows interaction between the E2 ubiquitin-conjugating enzyme and the acceptor ubiquitin. CBC(VHL) complex formation seems to promote neddylation. Deneddylated via its interaction with the COP9 signalosome (CSN) complex.

It localises to the nucleus. It participates in protein modification; protein ubiquitination. Functionally, core component of multiple cullin-RING-based ECS (ElonginB/C-CUL2/5-SOCS-box protein) E3 ubiquitin-protein ligase complexes, which mediate the ubiquitination of target proteins. CUL2 may serve as a rigid scaffold in the complex and may contribute to catalysis through positioning of the substrate and the ubiquitin-conjugating enzyme. The E3 ubiquitin-protein ligase activity of the complex is dependent on the neddylation of the cullin subunit and is inhibited by the association of the deneddylated cullin subunit with TIP120A/CAND1. The functional specificity of the ECS complex depends on the substrate recognition component. ECS(VHL) mediates the ubiquitination of hypoxia-inducible factor (HIF). A number of ECS complexes (containing either KLHDC2, KLHDC3, KLHDC10, APPBP2, FEM1A, FEM1B or FEM1C as substrate-recognition component) are part of the DesCEND (destruction via C-end degrons) pathway, which recognizes a C-degron located at the extreme C terminus of target proteins, leading to their ubiquitination and degradation. ECS complexes and ARIH1 collaborate in tandem to mediate ubiquitination of target proteins. ECS(LRR1) ubiquitinates MCM7 and promotes CMG replisome disassembly by VCP and chromatin extraction during S-phase. In Pongo abelii (Sumatran orangutan), this protein is Cullin-2 (CUL2).